We begin with the raw amino-acid sequence, 278 residues long: Urease accessory protein UreD 1 (278 aa).

This sequence belongs to the UreD family. UreD, UreF and UreG form a complex that acts as a GTP-hydrolysis-dependent molecular chaperone, activating the urease apoprotein by helping to assemble the nickel containing metallocenter of UreC. The UreE protein probably delivers the nickel.

Its subcellular location is the cytoplasm. Its function is as follows. Required for maturation of urease via the functional incorporation of the urease nickel metallocenter. This chain is Urease accessory protein UreD 1, found in Bradyrhizobium sp. (strain ORS 278).